The sequence spans 112 residues: Thioredoxin (112 aa).

The 111-residue stretch at 2–112 folds into the Thioredoxin domain; that stretch reads SEDSATVAVT…ALLRELSDAL (111 aa). A disulfide bond links C35 and C38.

Belongs to the thioredoxin family.

Participates in various redox reactions through the reversible oxidation of its active center dithiol to a disulfide and catalyzes dithiol-disulfide exchange reactions. This Mycolicibacterium smegmatis (Mycobacterium smegmatis) protein is Thioredoxin (trxA).